Consider the following 291-residue polypeptide: MELLCCEVDPMRRALPDPNLLYDDRVLHNLLTIEERYLPQCSYFKCVQKDIQPFMRRMVATWMLEVCEEQKCEEEVFPLAMNYLDRFLAVVPTRKCHLQLLGAVCMFLASKLKETIPLTAEKLCIYTDNSIKPQELLEWELVVLGKLKWNLAAVTPHDFIEHILRKLPLPKDKLVLIRKHAQTFIALCATDFNFAMYPPSMIATGSVGAAICGLQLDDGDRSLSGDSLTDFLAKITSTDVDCLKACQEQIESVLVSNLRQVRQQQQQSNPSKTIEELDQASTPTDVRDINL.

Residues 264–291 (QQQQSNPSKTIEELDQASTPTDVRDINL) form a disordered region. Phosphothreonine is present on T282.

The protein belongs to the cyclin family. Cyclin D subfamily. As to quaternary structure, interacts with the CDK4 and CDK6 protein kinases to form a serine/threonine kinase holoenzyme complex. The cyclin subunit imparts substrate specificity to the complex. Phosphorylation at Thr-282 by MAP kinases is required for ubiquitination and degradation by the DCX(AMBRA1) complex. Post-translationally, ubiquitinated by the DCX(AMBRA1) complex during the transition from G1 to S cell phase, leading to its degradation: ubiquitination is dependent on Thr-282 phosphorylation. The DCX(AMBRA1) complex represents the major regulator of CCND2 stability during the G1/S transition.

It localises to the nucleus. It is found in the cytoplasm. The protein resides in the nucleus membrane. Functionally, regulatory component of the cyclin D2-CDK4 (DC) complex that phosphorylates and inhibits members of the retinoblastoma (RB) protein family including RB1 and regulates the cell-cycle during G(1)/S transition. Phosphorylation of RB1 allows dissociation of the transcription factor E2F from the RB/E2F complex and the subsequent transcription of E2F target genes which are responsible for the progression through the G(1) phase. Hypophosphorylates RB1 in early G(1) phase. Cyclin D-CDK4 complexes are major integrators of various mitogenenic and antimitogenic signals. The polypeptide is G1/S-specific cyclin-D2 (CCND2) (Gallus gallus (Chicken)).